The chain runs to 986 residues: LRR receptor-like serine/threonine-protein kinase ER2 (986 aa).

Residues 1 to 21 (MTTTTTTRLLLAAILLAVAAA) form the signal peptide. Residues 22–581 (DDDGQTLLEI…VQRSSVSRSA (560 aa)) are Extracellular-facing. Asn-64 and Asn-73 each carry an N-linked (GlcNAc...) asparagine glycan. LRR repeat units follow at residues 68 to 89 (AVAA…AIGN), 90 to 114 (LKSV…IGDC), 116 to 138 (SLKT…ISKL), 139 to 161 (KHLE…TLSQ), 162 to 186 (LPNL…IYWN), 188 to 210 (VLQY…MCQL), 211 to 233 (TGLW…TIGN), 234 to 259 (CTSF…GFLQ), 261 to 280 (ATLS…VIGL), 281 to 304 (MQAL…ILGN), 306 to 329 (TYTE…LGNM), 330 to 352 (STLH…ELGK), 354 to 377 (TGLF…ISSC), 379 to 401 (NLIS…LHKL), 402 to 425 (ESIT…LAKM), 427 to 449 (NLDT…IGSL), 450 to 472 (EHLL…EFGN), 473 to 498 (LRSI…GMLQ), 500 to 520 (LILL…LINC), and 521 to 545 (FSLN…NFSR). Residues Asn-220 and Asn-233 are each glycosylated (N-linked (GlcNAc...) asparagine). Residues Asn-269, Asn-304, and Asn-328 are each glycosylated (N-linked (GlcNAc...) asparagine). Asn-373, Asn-391, and Asn-408 each carry an N-linked (GlcNAc...) asparagine glycan. Residue Asn-456 is glycosylated (N-linked (GlcNAc...) asparagine). 3 N-linked (GlcNAc...) asparagine glycosylation sites follow: Asn-509, Asn-527, and Asn-542. The chain crosses the membrane as a helical span at residues 582–602 (ILGIAVAGLVILLMILAAACW). Residues 603 to 986 (PHWAQVPKDV…FGEVISQNTE (384 aa)) are Cytoplasmic-facing. Residues 653-934 (LSEKYIIGYG…YPDPPSKPAL (282 aa)) form the Protein kinase domain. ATP-binding positions include 659-667 (IGYGASSTV) and Lys-681. The active-site Proton acceptor is the Asp-779.

This sequence belongs to the protein kinase superfamily. Ser/Thr protein kinase family.

It is found in the cell membrane. It carries out the reaction L-seryl-[protein] + ATP = O-phospho-L-seryl-[protein] + ADP + H(+). The catalysed reaction is L-threonyl-[protein] + ATP = O-phospho-L-threonyl-[protein] + ADP + H(+). Functionally, receptor kinase that may be involved in the regulation of cell proliferation and cell growth. In Oryza sativa subsp. japonica (Rice), this protein is LRR receptor-like serine/threonine-protein kinase ER2.